Reading from the N-terminus, the 294-residue chain is tRNA pseudouridine synthase B (294 aa).

The active-site Nucleophile is D38.

This sequence belongs to the pseudouridine synthase TruB family. Type 1 subfamily.

The enzyme catalyses uridine(55) in tRNA = pseudouridine(55) in tRNA. Responsible for synthesis of pseudouridine from uracil-55 in the psi GC loop of transfer RNAs. The sequence is that of tRNA pseudouridine synthase B from Clostridium perfringens (strain ATCC 13124 / DSM 756 / JCM 1290 / NCIMB 6125 / NCTC 8237 / Type A).